Here is a 233-residue protein sequence, read N- to C-terminus: Lipoprotein-releasing system ATP-binding protein LolD (233 aa).

An ABC transporter domain is found at 6–233; that stretch reads LQCDNLCKRY…TAELSLMGAE (228 aa). ATP is bound at residue 42 to 49; it reads GSSGSGKS.

This sequence belongs to the ABC transporter superfamily. Lipoprotein translocase (TC 3.A.1.125) family. The complex is composed of two ATP-binding proteins (LolD) and two transmembrane proteins (LolC and LolE).

It localises to the cell inner membrane. In terms of biological role, part of the ABC transporter complex LolCDE involved in the translocation of mature outer membrane-directed lipoproteins, from the inner membrane to the periplasmic chaperone, LolA. Responsible for the formation of the LolA-lipoprotein complex in an ATP-dependent manner. The chain is Lipoprotein-releasing system ATP-binding protein LolD from Escherichia coli O6:K15:H31 (strain 536 / UPEC).